We begin with the raw amino-acid sequence, 220 residues long: Pyridoxine/pyridoxamine 5'-phosphate oxidase (220 aa).

Residues 13-16 and lysine 77 each bind substrate; that span reads RVEY. Residues 72-77, 87-88, lysine 94, and glutamine 116 each bind FMN; these read RTVLCK and FT. Substrate contacts are provided by tyrosine 134, arginine 138, and serine 142. Residues 151 to 152 and tryptophan 197 each bind FMN; that span reads QS. A substrate-binding site is contributed by 203-205; that stretch reads RLH. Position 207 (arginine 207) interacts with FMN.

This sequence belongs to the pyridoxamine 5'-phosphate oxidase family. As to quaternary structure, homodimer. FMN serves as cofactor.

It catalyses the reaction pyridoxamine 5'-phosphate + O2 + H2O = pyridoxal 5'-phosphate + H2O2 + NH4(+). It carries out the reaction pyridoxine 5'-phosphate + O2 = pyridoxal 5'-phosphate + H2O2. It functions in the pathway cofactor metabolism; pyridoxal 5'-phosphate salvage; pyridoxal 5'-phosphate from pyridoxamine 5'-phosphate: step 1/1. Its pathway is cofactor metabolism; pyridoxal 5'-phosphate salvage; pyridoxal 5'-phosphate from pyridoxine 5'-phosphate: step 1/1. Catalyzes the oxidation of either pyridoxine 5'-phosphate (PNP) or pyridoxamine 5'-phosphate (PMP) into pyridoxal 5'-phosphate (PLP). The protein is Pyridoxine/pyridoxamine 5'-phosphate oxidase of Mycolicibacterium paratuberculosis (strain ATCC BAA-968 / K-10) (Mycobacterium paratuberculosis).